The primary structure comprises 212 residues: Ribosomal RNA small subunit methyltransferase G (212 aa).

Residues Phe78, 96 to 98 (ESS), 124 to 125 (VE), and Arg141 contribute to the S-adenosyl-L-methionine site.

Belongs to the methyltransferase superfamily. RNA methyltransferase RsmG family.

The protein resides in the cytoplasm. In terms of biological role, specifically methylates the N7 position of a guanine in 16S rRNA. This Onion yellows phytoplasma (strain OY-M) protein is Ribosomal RNA small subunit methyltransferase G.